Consider the following 103-residue polypeptide: MYAVIKTGGKQYKVAEGESIFVEKLDVQAGEEVVFDQVILVANGDDVKVGTPLVEGAKVVASVDKQGKEKKVVTFKYKPKKHSHSKYGHRQPYTKVTVKSIEA.

The protein belongs to the bacterial ribosomal protein bL21 family. In terms of assembly, part of the 50S ribosomal subunit. Contacts protein L20.

This protein binds to 23S rRNA in the presence of protein L20. The protein is Large ribosomal subunit protein bL21 of Lactobacillus delbrueckii subsp. bulgaricus (strain ATCC 11842 / DSM 20081 / BCRC 10696 / JCM 1002 / NBRC 13953 / NCIMB 11778 / NCTC 12712 / WDCM 00102 / Lb 14).